A 975-amino-acid chain; its full sequence is Probable outer membrane protein PmpA (975 aa).

A signal peptide spans 1–51 (MNRVIEIHAHYDQRQLSQSPNTNFLVHHPYLTLIPKFLLGALIVYAPYSFA). The region spanning 699 to 975 (RSLIPTSYFG…SLSCGGYVGF (277 aa)) is the Autotransporter domain.

Belongs to the PMP outer membrane protein family.

It localises to the secreted. The protein localises to the cell wall. It is found in the cell outer membrane. The sequence is that of Probable outer membrane protein PmpA (pmpA) from Chlamydia trachomatis serovar D (strain ATCC VR-885 / DSM 19411 / UW-3/Cx).